A 488-amino-acid chain; its full sequence is Glutamate--tRNA ligase (488 aa).

Positions 16 to 26 match the 'HIGH' region motif; the sequence is PSPTGEPHVGT. The 'KMSKS' region signature appears at 257–261; it reads KLSKR. K260 lines the ATP pocket.

This sequence belongs to the class-I aminoacyl-tRNA synthetase family. Glutamate--tRNA ligase type 1 subfamily. In terms of assembly, monomer.

The protein resides in the cytoplasm. It carries out the reaction tRNA(Glu) + L-glutamate + ATP = L-glutamyl-tRNA(Glu) + AMP + diphosphate. Catalyzes the attachment of glutamate to tRNA(Glu) in a two-step reaction: glutamate is first activated by ATP to form Glu-AMP and then transferred to the acceptor end of tRNA(Glu). This Rhizobium johnstonii (strain DSM 114642 / LMG 32736 / 3841) (Rhizobium leguminosarum bv. viciae) protein is Glutamate--tRNA ligase.